Consider the following 238-residue polypeptide: Ribosomal RNA small subunit methyltransferase G (238 aa).

Residues G99, L104, D122–T124, V150–E151, and R164 contribute to the S-adenosyl-L-methionine site.

This sequence belongs to the methyltransferase superfamily. RNA methyltransferase RsmG family.

The protein localises to the cytoplasm. Functionally, specifically methylates the N7 position of a guanine in 16S rRNA. This Chlorobium luteolum (strain DSM 273 / BCRC 81028 / 2530) (Pelodictyon luteolum) protein is Ribosomal RNA small subunit methyltransferase G.